Reading from the N-terminus, the 135-residue chain is Large ribosomal subunit protein uL22c (135 aa).

Belongs to the universal ribosomal protein uL22 family. Part of the 50S ribosomal subunit.

Its subcellular location is the plastid. Functionally, this protein binds specifically to 23S rRNA. In terms of biological role, the globular domain of the protein is located near the polypeptide exit tunnel on the outside of the subunit, while an extended beta-hairpin is found that lines the wall of the exit tunnel in the center of the 70S ribosome. This is Large ribosomal subunit protein uL22c (rpl22) from Cuscuta exaltata (Tall dodder).